The primary structure comprises 347 residues: Isocitrate dehydrogenase [NAD] subunit alpha, mitochondrial (347 aa).

The transit peptide at 1–8 (QKQVTRGF) directs the protein to the mitochondrion. 14-42 (TVTLIPGDGIGPEISAAVMKIFDAAKAPI) provides a ligand contact to NAD(+). K58 carries the N6-succinyllysine modification. T82 carries the post-translational modification Phosphothreonine. Substrate-binding residues include R96, R106, and R127. N6-acetyllysine is present on K204. Mg(2+)-binding residues include D214, D238, and D242. K324 is subject to N6-acetyllysine; alternate. Position 324 is an N6-succinyllysine; alternate (K324). Residue K331 is modified to N6-succinyllysine.

The protein belongs to the isocitrate and isopropylmalate dehydrogenases family. Heterooligomer of subunits alpha (IDH3A), beta (IDH3B), and gamma (IDH3G) in the apparent ratio of 2:1:1. The heterodimer containing one IDH3A and one IDH3B subunit and the heterodimer containing one IDH3A and one IDH3G subunit assemble into a heterotetramer (which contains two subunits of IDH3A, one of IDH3B and one of IDH3G) and further into the heterooctamer. Requires Mg(2+) as cofactor. It depends on Mn(2+) as a cofactor.

It is found in the mitochondrion. The enzyme catalyses D-threo-isocitrate + NAD(+) = 2-oxoglutarate + CO2 + NADH. The heterotetramer and the heterodimer composed of IDH3A and IDH3G subunits can be allosterically activated by citrate (CIT) or/and ADP, and the two activators can act independently or synergistically. The heterodimer composed of IDH3A and IDH3B subunits cannot be allosterically regulated and the allosteric regulation of the heterotetramer is through the IDH3G subunit and not the IDH3B subunit. The IDH3G subunit contains the allosteric site which consists of a CIT-binding site and an ADP-binding site, and the binding of CIT and ADP causes conformational changes at the allosteric site which are transmitted to the active site in the catalytic subunit (IDH3A) through a cascade of conformational changes at the heterodimer interface, leading to stabilization of the isocitrate-binding at the active site and thus activation of the enzyme. ATP can activate the heterotetramer and the heterodimer composed of IDH3A and IDH3G subunits at low concentrations but inhibits their activities at high concentrations, whereas ATP exhibits only inhibitory effect on the heterodimer composed of IDH3A and IDH3B subunits. Catalytic subunit of the enzyme which catalyzes the decarboxylation of isocitrate (ICT) into alpha-ketoglutarate. The heterodimer composed of the alpha (IDH3A) and beta (IDH3B) subunits and the heterodimer composed of the alpha (IDH3A) and gamma (IDH3G) subunits, have considerable basal activity but the full activity of the heterotetramer (containing two subunits of IDH3A, one of IDH3B and one of IDH3G) requires the assembly and cooperative function of both heterodimers. This Macaca fascicularis (Crab-eating macaque) protein is Isocitrate dehydrogenase [NAD] subunit alpha, mitochondrial (IDH3A).